We begin with the raw amino-acid sequence, 365 residues long: Anhydro-N-acetylmuramic acid kinase (365 aa).

9 to 16 (GTSLDGVD) contacts ATP.

The protein belongs to the anhydro-N-acetylmuramic acid kinase family.

It carries out the reaction 1,6-anhydro-N-acetyl-beta-muramate + ATP + H2O = N-acetyl-D-muramate 6-phosphate + ADP + H(+). Its pathway is amino-sugar metabolism; 1,6-anhydro-N-acetylmuramate degradation. It functions in the pathway cell wall biogenesis; peptidoglycan recycling. Catalyzes the specific phosphorylation of 1,6-anhydro-N-acetylmuramic acid (anhMurNAc) with the simultaneous cleavage of the 1,6-anhydro ring, generating MurNAc-6-P. Is required for the utilization of anhMurNAc either imported from the medium or derived from its own cell wall murein, and thus plays a role in cell wall recycling. This is Anhydro-N-acetylmuramic acid kinase from Zymomonas mobilis subsp. mobilis (strain ATCC 31821 / ZM4 / CP4).